The chain runs to 452 residues: NADH-ubiquinone oxidoreductase chain 4 (452 aa).

14 consecutive transmembrane segments (helical) span residues 4–24, 29–49, 59–79, 88–110, 114–136, 144–164, 182–202, 221–241, 252–272, 282–304, 309–331, 345–365, 390–410, and 432–452; these read LVLG…SMVW, VGSV…MTIS, FVSL…LLAS, LIYQ…LAFM, LLLF…TRWG, AGTY…ICLI, VFQL…AFLV, PIAG…YGMM, MLSS…MGGI, LIAY…GVAW, AMVL…NLWY, LIMI…MNMA, IVYM…LFGM, and LLTT…GLMF.

The protein belongs to the complex I subunit 4 family.

It localises to the mitochondrion membrane. It catalyses the reaction a ubiquinone + NADH + 5 H(+)(in) = a ubiquinol + NAD(+) + 4 H(+)(out). Functionally, core subunit of the mitochondrial membrane respiratory chain NADH dehydrogenase (Complex I) that is believed to belong to the minimal assembly required for catalysis. Complex I functions in the transfer of electrons from NADH to the respiratory chain. The immediate electron acceptor for the enzyme is believed to be ubiquinone. This is NADH-ubiquinone oxidoreductase chain 4 (ND4) from Branchiostoma floridae (Florida lancelet).